The sequence spans 355 residues: 6-aminohexanoate-oligomer endohydrolase (355 aa).

Threonine 267 functions as the Nucleophile in the catalytic mechanism.

The protein belongs to the peptidase S58 family. As to quaternary structure, heterotetramer composed of 4 alpha/beta heterodimers. Exists at the monomer/dimer/trimer equilibrium in aqueous solution. Post-translationally, expressed as an inactive precursor that is cleaved autocatalytically at Asn266/Thr267 to generate an active enzyme composed of an alpha subunit and a beta subunit.

The catalysed reaction is [N-(6-aminohexanoyl)]n + H2O = [N-(6-aminohexanoyl)]n-x + [N-(6-aminohexanoyl)]x.. It functions in the pathway xenobiotic degradation; nylon-6 oligomer degradation. Functionally, involved in the degradation of nylon-6 oligomers. Degrades cyclic and linear oligomers of 6-aminohexanoate (Ahx) with a degree of polymerization greater than three by an endo-type mode. Cannot use Ahx cyclic dimer or the Ahx linear dimer. The polypeptide is 6-aminohexanoate-oligomer endohydrolase (Paenarthrobacter ureafaciens).